We begin with the raw amino-acid sequence, 623 residues long: C2H2-type transcription factor zfpA (623 aa).

Positions 202 to 219 (GLAVSSPMPNSGPHSRSV) are enriched in polar residues. 2 disordered regions span residues 202–256 (GLAV…EKGR) and 468–493 (SNKA…NGKA). The segment covering 227–239 (SISSTNSRRSQLS) has biased composition (low complexity). The C2H2-type zinc finger occupies 255 to 276 (GRCPHPDCGRVFKDLKAHMLTH).

It is found in the nucleus. Functionally, transcription factor involved in fungal growth and virulence potential. Negatively regulates antifungal drug susceptibility via transcriptional inhibition of the expressions of drug efflux pumps in a crzA-dependent way. Under the treatment of azoles, both zfpA and crzA transfer to nuclei and coregulate the expression of multidrug transporters and then keep normal drug susceptibility in fungal cells. The sequence is that of C2H2-type transcription factor zfpA from Aspergillus fumigatus (strain CBS 144.89 / FGSC A1163 / CEA10) (Neosartorya fumigata).